The sequence spans 131 residues: Histone H2A-beta (131 aa).

An N-acetylserine modification is found at S2. N6-acetyllysine occurs at positions 5 and 9. Q106 bears the N5-methylglutamine mark. Phosphoserine is present on S128. The [ST]-Q motif motif lies at 128–129; it reads SQ.

Belongs to the histone H2A family. The nucleosome is a histone octamer containing two molecules each of H2A, H2B, H3 and H4 assembled in one H3-H4 heterotetramer and two H2A-H2B heterodimers. The octamer wraps approximately 147 bp of DNA. In terms of processing, phosphorylated to form H2AS128ph (gamma-H2A) in response to DNA double-strand breaks (DSBs) generated by exogenous genotoxic agents and by stalled replication forks. Phosphorylation is dependent on the DNA damage checkpoint kinases rad3/ATR and tel1/ATM, spreads on either side of a detected DSB site and may mark the surrounding chromatin for recruitment of proteins required for DNA damage signaling and repair. Gamma-H2A is required for recruiting crb2, a modulator of DNA damage checkpoint signaling, to DSB sites. Gamma-H2A is removed from the DNA prior to the strand invasion-primer extension step of the repair process and subsequently dephosphorylated. Dephosphorylation is necessary for efficient recovery from the DNA damage checkpoint. Post-translationally, acetylated by esa1 to form H2AK4ac and H2AK7ac.

Its subcellular location is the nucleus. It localises to the chromosome. Its function is as follows. Core component of nucleosome which plays a central role in DNA double strand break (DSB) repair. Nucleosomes wrap and compact DNA into chromatin, limiting DNA accessibility to the cellular machineries which require DNA as a template. Histones thereby play a central role in transcription regulation, DNA repair, DNA replication and chromosomal stability. DNA accessibility is regulated via a complex set of post-translational modifications of histones, also called histone code, and nucleosome remodeling. The protein is Histone H2A-beta (hta2) of Schizosaccharomyces pombe (strain 972 / ATCC 24843) (Fission yeast).